The chain runs to 539 residues: Cytochrome c oxidase subunit 1 homolog, bacteroid (539 aa).

Helical transmembrane passes span 4 to 24 (TVEM…AGLA), 28 to 48 (LFGA…LVLM), and 75 to 95 (GVVA…VVAL). Position 117 (His117) interacts with heme b. 8 helical membrane-spanning segments follow: residues 118–138 (TSAV…FYVV), 154–174 (FVFW…LLGI), 187–207 (VDLW…GTIM), 214–234 (IYVA…LHVV), 265–285 (GHNA…YYFI), 298–318 (LSII…PHHL), 330–350 (LGMV…INGL), and 368–388 (MMVM…MMSI). The Cu cation site is built by His266, His316, and His317. Residues His404 and His406 each contribute to the heme b site. The next 4 helical transmembrane spans lie at 405 to 425 (VHSG…YYLV), 443 to 463 (HFWL…VAGI), 475 to 495 (QGFL…YYVM), and 499 to 519 (GGAL…MTIL).

This sequence belongs to the heme-copper respiratory oxidase family. Cu(2+) is required as a cofactor. Heme b serves as cofactor.

The protein localises to the cell membrane. The catalysed reaction is 4 Fe(II)-[cytochrome c] + O2 + 8 H(+)(in) = 4 Fe(III)-[cytochrome c] + 2 H2O + 4 H(+)(out). Its pathway is energy metabolism; oxidative phosphorylation. Functionally, cytochrome c oxidase is the component of the respiratory chain that catalyzes the reduction of oxygen to water. Subunits 1-3 form the functional core of the enzyme complex. Co I is the catalytic subunit of the enzyme. Electrons originating in cytochrome c or a quinol are transferred to the bimetallic center formed by a high-spin heme and copper B. The protein is Cytochrome c oxidase subunit 1 homolog, bacteroid (fixN) of Rhizobium meliloti (strain 1021) (Ensifer meliloti).